We begin with the raw amino-acid sequence, 682 residues long: Potassium-transporting ATPase ATP-binding subunit (682 aa).

A run of 4 helical transmembrane segments spans residues 34-54 (PVMF…IAMA), 62-82 (ALFS…ANFA), 219-239 (IALT…TATL), and 254-274 (VLVA…LSAI). Catalysis depends on aspartate 307, which acts as the 4-aspartylphosphate intermediate. ATP is bound by residues aspartate 344, glutamate 348, 377-384 (FTAQSRMS), and lysine 395. Aspartate 518 and aspartate 522 together coordinate Mg(2+). Helical transmembrane passes span 588–608 (FAII…LNIM), 616–636 (AILS…PLAL), and 656–676 (IYGL…DLLL).

It belongs to the cation transport ATPase (P-type) (TC 3.A.3) family. Type IA subfamily. As to quaternary structure, the system is composed of three essential subunits: KdpA, KdpB and KdpC.

The protein localises to the cell inner membrane. The catalysed reaction is K(+)(out) + ATP + H2O = K(+)(in) + ADP + phosphate + H(+). Its function is as follows. Part of the high-affinity ATP-driven potassium transport (or Kdp) system, which catalyzes the hydrolysis of ATP coupled with the electrogenic transport of potassium into the cytoplasm. This subunit is responsible for energy coupling to the transport system and for the release of the potassium ions to the cytoplasm. In Escherichia coli (strain UTI89 / UPEC), this protein is Potassium-transporting ATPase ATP-binding subunit.